Reading from the N-terminus, the 474-residue chain is Lactococcin A secretion protein LcnD (474 aa).

Topologically, residues 1–21 (MFDKKLLESSELYDKRYRNFS) are cytoplasmic. Residues 22–44 (TLIILPLFILLVGGVIFTFFAHK) traverse the membrane as a helical segment. Topologically, residues 45–474 (ELTVISTGSI…LDKIMGRGNQ (430 aa)) are extracellular.

It belongs to the membrane fusion protein (MFP) (TC 8.A.1) family.

It localises to the cell membrane. Its function is as follows. Involved in the secretion of lactococcin A. This chain is Lactococcin A secretion protein LcnD (lcnD), found in Lactococcus lactis subsp. cremoris (Streptococcus cremoris).